Consider the following 363-residue polypeptide: Histone-lysine N-methyltransferase ASHH3 (363 aa).

The region spanning 63–114 is the AWS domain; the sequence is DDGIFCSCSSSSPGSSSTVCGSNCHCGMLFSSCSSSCKCGSECNNKPFQQRH. One can recognise an SET domain in the interval 116–233; sequence KKMKLIQTEK…KGEHLTYDYQ (118 aa). Residues 239-255 enclose the Post-SET domain; that stretch reads ADQDCHCGAVGCRRKLG.

The protein belongs to the class V-like SAM-binding methyltransferase superfamily. Histone-lysine methyltransferase family. SET2 subfamily.

The protein resides in the nucleus. The protein localises to the chromosome. It is found in the centromere. The catalysed reaction is L-lysyl-[histone] + S-adenosyl-L-methionine = N(6)-methyl-L-lysyl-[histone] + S-adenosyl-L-homocysteine + H(+). Its function is as follows. Histone methyltransferase. This is Histone-lysine N-methyltransferase ASHH3 (ASHH3) from Arabidopsis thaliana (Mouse-ear cress).